Reading from the N-terminus, the 397-residue chain is Gastric triacylglycerol lipase (397 aa).

Positions 1–19 (MWWLLVTVCFIHMSGNAFC) are cleaved as a signal peptide. Residue N33 is glycosylated (N-linked (GlcNAc...) asparagine). One can recognise an AB hydrolase-1 domain in the interval 77–376 (PVVFLQHGLL…PNYNHLDFIW (300 aa)). The active-site Nucleophile is the S171. Cysteines 245 and 254 form a disulfide. N270 and N326 each carry an N-linked (GlcNAc...) asparagine glycan. Catalysis depends on charge relay system residues D342 and H371.

It belongs to the AB hydrolase superfamily. Lipase family.

Its subcellular location is the secreted. The enzyme catalyses a triacylglycerol + H2O = a diacylglycerol + a fatty acid + H(+). The catalysed reaction is 1,2,3-tri-(9Z-octadecenoyl)-glycerol + H2O = 1,2-di-(9Z-octadecenoyl)-sn-glycerol + (9Z)-octadecenoate + H(+). It catalyses the reaction 1,2,3-trioctanoylglycerol + H2O = 1,2-dioctanoyl-sn-glycerol + octanoate + H(+). Its activity is regulated as follows. Inhibited by diethylp-nitrophenyl phosphate but not inhibited by thiol reagents 5,5'-dithiobis(2-nitrobenzoic acid) or 4,4'-dithiopyridine. Catalyzes the hydrolysis of triacylglycerols to yield free fatty acids, diacylglycerol, monoacylglycerol, and glycerol. Shows a preferential hydrolysis at the sn-3 position of triacylglycerol. This is Gastric triacylglycerol lipase (LIPF) from Bos taurus (Bovine).